The following is a 483-amino-acid chain: Regulatory protein ViaA (483 aa).

Belongs to the ViaA family. Homodimer. Interacts with RavA.

The protein resides in the cytoplasm. Its function is as follows. Component of the RavA-ViaA chaperone complex, which may act on the membrane to optimize the function of some of the respiratory chains. ViaA stimulates the ATPase activity of RavA. This chain is Regulatory protein ViaA, found in Salmonella arizonae (strain ATCC BAA-731 / CDC346-86 / RSK2980).